We begin with the raw amino-acid sequence, 155 residues long: Ribosomal RNA large subunit methyltransferase H (155 aa).

Residues Leu72, Gly104, and 123–128 (LSRMTF) each bind S-adenosyl-L-methionine.

This sequence belongs to the RNA methyltransferase RlmH family. In terms of assembly, homodimer.

It is found in the cytoplasm. It carries out the reaction pseudouridine(1915) in 23S rRNA + S-adenosyl-L-methionine = N(3)-methylpseudouridine(1915) in 23S rRNA + S-adenosyl-L-homocysteine + H(+). Its function is as follows. Specifically methylates the pseudouridine at position 1915 (m3Psi1915) in 23S rRNA. The sequence is that of Ribosomal RNA large subunit methyltransferase H from Kosmotoga olearia (strain ATCC BAA-1733 / DSM 21960 / TBF 19.5.1).